A 330-amino-acid polypeptide reads, in one-letter code: tRNA U34 carboxymethyltransferase (330 aa).

Carboxy-S-adenosyl-L-methionine contacts are provided by residues lysine 91, tryptophan 105, lysine 110, glycine 130, 152–154 (DPS), 181–182 (IE), methionine 196, tyrosine 200, and arginine 315.

The protein belongs to the class I-like SAM-binding methyltransferase superfamily. CmoB family. Homotetramer.

The enzyme catalyses carboxy-S-adenosyl-L-methionine + 5-hydroxyuridine(34) in tRNA = 5-carboxymethoxyuridine(34) in tRNA + S-adenosyl-L-homocysteine + H(+). In terms of biological role, catalyzes carboxymethyl transfer from carboxy-S-adenosyl-L-methionine (Cx-SAM) to 5-hydroxyuridine (ho5U) to form 5-carboxymethoxyuridine (cmo5U) at position 34 in tRNAs. This is tRNA U34 carboxymethyltransferase from Shewanella oneidensis (strain ATCC 700550 / JCM 31522 / CIP 106686 / LMG 19005 / NCIMB 14063 / MR-1).